Consider the following 894-residue polypeptide: Bifunctional enzyme RhaA/RhaB (894 aa).

Residues 1 to 465 (MGEYRLAVDI…TAFPVTYFLP (465 aa)) form a rhamnulokinase region. The segment at 466 to 894 (QRSESHVSSR…KRESEKAKQR (429 aa)) is L-rhamnose isomerase. Residues His-730, Asp-762, and Asp-764 each contribute to the Mn(2+) site.

In the N-terminal section; belongs to the rhamnulokinase family. It in the C-terminal section; belongs to the rhamnose isomerase family. Requires Mn(2+) as cofactor.

The protein localises to the cytoplasm. It carries out the reaction L-rhamnulose + ATP = L-rhamnulose 1-phosphate + ADP + H(+). The enzyme catalyses L-rhamnopyranose = L-rhamnulose. It functions in the pathway carbohydrate degradation; L-rhamnose degradation; glycerone phosphate from L-rhamnose: step 1/3. It participates in carbohydrate degradation; L-rhamnose degradation; glycerone phosphate from L-rhamnose: step 2/3. The polypeptide is Bifunctional enzyme RhaA/RhaB (rhaAB) (Shouchella clausii (strain KSM-K16) (Alkalihalobacillus clausii)).